The following is a 363-amino-acid chain: MAP kinase kinase skh1/pek1 (363 aa).

The 265-residue stretch at 79 to 343 (ILYMNSLGEG…PQKMLTHPWV (265 aa)) folds into the Protein kinase domain. Residues 85-93 (LGEGVSGSV) and lysine 108 contribute to the ATP site. Aspartate 206 acts as the Proton acceptor in catalysis. Serine 234 bears the Phosphoserine mark. Threonine 238 carries the post-translational modification Phosphothreonine.

It belongs to the protein kinase superfamily. STE Ser/Thr protein kinase family. MAP kinase kinase subfamily.

It catalyses the reaction L-seryl-[protein] + ATP = O-phospho-L-seryl-[protein] + ADP + H(+). The catalysed reaction is L-threonyl-[protein] + ATP = O-phospho-L-threonyl-[protein] + ADP + H(+). The enzyme catalyses L-tyrosyl-[protein] + ATP = O-phospho-L-tyrosyl-[protein] + ADP + H(+). With respect to regulation, activated by mkh1. Functionally, involved in the mkh1 signal transduction pathway that plays a role in cell wall integrity. Activates spm1/pmk1 via phosphorylation. The sequence is that of MAP kinase kinase skh1/pek1 (skh1) from Schizosaccharomyces pombe (strain 972 / ATCC 24843) (Fission yeast).